A 565-amino-acid chain; its full sequence is Augmin complex subunit dgt3 (565 aa).

2 coiled-coil regions span residues 135–171 (ELQL…AKKA) and 212–241 (QDYD…IQFY).

The protein belongs to the HAUS3 family. As to quaternary structure, component of the augmin complex composed of dgt2, dgt3, dgt4, dgt5, dgt6, msd1, msd5 and wac. The complex interacts directly or indirectly with microtubules and is required for centrosome-independent generation of spindle microtubules.

The protein resides in the cytoplasm. Its subcellular location is the cytoskeleton. The protein localises to the spindle. As part of the augmin complex, plays a role in centrosome-independent generation of spindle microtubules. The complex is required for mitotic spindle assembly through its involvement in localizing gamma-tubulin to spindle microtubules. The protein is Augmin complex subunit dgt3 of Drosophila melanogaster (Fruit fly).